The primary structure comprises 190 residues: uncharacterized protein (190 aa).

Residues Leu12–Ala34 traverse the membrane as a helical segment.

The protein localises to the membrane. This is an uncharacterized protein from Archaeoglobus fulgidus (strain ATCC 49558 / DSM 4304 / JCM 9628 / NBRC 100126 / VC-16).